A 278-amino-acid polypeptide reads, in one-letter code: Phosphonates import ATP-binding protein PhnC 2 (278 aa).

Positions 5-253 (IRVDSLNKTF…FLNELYGAEG (249 aa)) constitute an ABC transporter domain. 37-44 (GASGSGKS) is an ATP binding site.

The protein belongs to the ABC transporter superfamily. Phosphonates importer (TC 3.A.1.9.1) family. In terms of assembly, the complex is composed of two ATP-binding proteins (PhnC), two transmembrane proteins (PhnE) and a solute-binding protein (PhnD).

The protein resides in the cell inner membrane. It catalyses the reaction phosphonate(out) + ATP + H2O = phosphonate(in) + ADP + phosphate + H(+). Its function is as follows. Part of the ABC transporter complex PhnCDE involved in phosphonates import. Responsible for energy coupling to the transport system. The protein is Phosphonates import ATP-binding protein PhnC 2 of Pseudomonas aeruginosa (strain ATCC 15692 / DSM 22644 / CIP 104116 / JCM 14847 / LMG 12228 / 1C / PRS 101 / PAO1).